A 514-amino-acid polypeptide reads, in one-letter code: 1-pyrroline-5-carboxylate dehydrogenase (514 aa).

Catalysis depends on residues Glu-286 and Cys-320.

This sequence belongs to the aldehyde dehydrogenase family. RocA subfamily.

The catalysed reaction is L-glutamate 5-semialdehyde + NAD(+) + H2O = L-glutamate + NADH + 2 H(+). It functions in the pathway amino-acid degradation; L-proline degradation into L-glutamate; L-glutamate from L-proline: step 2/2. This is 1-pyrroline-5-carboxylate dehydrogenase from Staphylococcus aureus (strain MSSA476).